The chain runs to 410 residues: Dual-specificity RNA methyltransferase RlmN (410 aa).

Catalysis depends on Glu-123, which acts as the Proton acceptor. The Radical SAM core domain maps to 129–378; the sequence is EEGRGTLCIS…IRTPRGRDIL (250 aa). Residues Cys-136 and Cys-381 are joined by a disulfide bond. [4Fe-4S] cluster is bound by residues Cys-143, Cys-147, and Cys-150. S-adenosyl-L-methionine contacts are provided by residues 207–208, Ser-239, 261–263, and Asn-338; these read GE and SLH. Catalysis depends on Cys-381, which acts as the S-methylcysteine intermediate.

This sequence belongs to the radical SAM superfamily. RlmN family. [4Fe-4S] cluster is required as a cofactor.

It is found in the cytoplasm. It catalyses the reaction adenosine(2503) in 23S rRNA + 2 reduced [2Fe-2S]-[ferredoxin] + 2 S-adenosyl-L-methionine = 2-methyladenosine(2503) in 23S rRNA + 5'-deoxyadenosine + L-methionine + 2 oxidized [2Fe-2S]-[ferredoxin] + S-adenosyl-L-homocysteine. The enzyme catalyses adenosine(37) in tRNA + 2 reduced [2Fe-2S]-[ferredoxin] + 2 S-adenosyl-L-methionine = 2-methyladenosine(37) in tRNA + 5'-deoxyadenosine + L-methionine + 2 oxidized [2Fe-2S]-[ferredoxin] + S-adenosyl-L-homocysteine. Specifically methylates position 2 of adenine 2503 in 23S rRNA and position 2 of adenine 37 in tRNAs. m2A2503 modification seems to play a crucial role in the proofreading step occurring at the peptidyl transferase center and thus would serve to optimize ribosomal fidelity. This is Dual-specificity RNA methyltransferase RlmN from Mesorhizobium japonicum (strain LMG 29417 / CECT 9101 / MAFF 303099) (Mesorhizobium loti (strain MAFF 303099)).